We begin with the raw amino-acid sequence, 95 residues long: High mobility group nucleosome-binding domain-containing protein 3 (95 aa).

3 stretches are compositionally biased toward basic and acidic residues: residues 1–25, 39–53, and 62–72; these read MPKR…EPTR, PEPK…KEPG, and GKKEEKQEAGK. Residues 1–95 are disordered; sequence MPKRKSPENA…EEVLSTNASH (95 aa). Residue S6 is modified to Phosphoserine. The residue at position 78 (S78) is a Phosphoserine.

It belongs to the HMGN family. In terms of assembly, interacts with the ligand binding domain of the thyroid receptor (TR) (in vitro). Requires the presence of thyroid hormone for its interaction. Interacts with transcriptional regulator SEHBP. Interacts with nucleosomes.

The protein localises to the nucleus. Its function is as follows. Binds to nucleosomes, regulating chromatin structure and consequently, chromatin-dependent processes such as transcription, DNA replication and DNA repair. Affects both insulin and glucagon levels and modulates the expression of pancreatic genes involved in insulin secretion. Regulates the expression of the glucose transporter SLC2A2 by binding specifically to its promoter region and recruiting PDX1 and additional transcription factors. Regulates the expression of SLC6A9, a glycine transporter which regulates the glycine concentration in synaptic junctions in the central nervous system, by binding to its transcription start site. May play a role in ocular development and astrocyte function. In Rattus norvegicus (Rat), this protein is High mobility group nucleosome-binding domain-containing protein 3 (Hmgn3).